The following is a 699-amino-acid chain: Endogenous retrovirus group K member 113 Env polyprotein (699 aa).

A disordered region spans residues 1–47 (MNPSEMQRKAPPRRRRHRNRAPLTHKMNKMVTSEEQMKLPSTKKAEP). A signal peptide spans 1–89 (MNPSEMQRKA…ALMIVSMVVS (89 aa)). Positions 10–20 (APPRRRRHRNR) are enriched in basic residues. Residues 90-632 (LPMPAGAAAA…NLNPVTWVKT (543 aa)) are Extracellular-facing. 7 N-linked (GlcNAc...) asparagine glycosylation sites follow: Asn100, Asn128, Asn153, Asn274, Asn355, Asn372, and Asn461. A fusion peptide region spans residues 466–486 (FIFTLIAVIMGLIAVTATAAV). N-linked (GlcNAc...) asparagine glycosylation is found at Asn507, Asn554, Asn566, and Asn585. A helical transmembrane segment spans residues 633 to 653 (IGSTTIINLILILVCLFCLLL). At 654-699 (VCRCTQQLRRDSDHRERAMMTMAVLSKRKGGNVGKSKRDQIVTVSV) the chain is on the cytoplasmic side.

This sequence belongs to the beta type-B retroviral envelope protein family. HERV class-II K(HML-2) env subfamily. As to quaternary structure, the surface (SU) and transmembrane (TM) proteins form a heterodimer. SU and TM are attached by noncovalent interactions or by a labile interchain disulfide bond. Specific enzymatic cleavages in vivo yield the mature SU and TM proteins.

Its subcellular location is the cell membrane. The protein localises to the virion. In terms of biological role, retroviral envelope proteins mediate receptor recognition and membrane fusion during early infection. Endogenous envelope proteins may have kept, lost or modified their original function during evolution. This endogenous envelope protein has lost its original fusogenic properties. SU mediates receptor recognition. Its function is as follows. TM anchors the envelope heterodimer to the viral membrane through one transmembrane domain. The other hydrophobic domain, called fusion peptide, mediates fusion of the viral membrane with the target cell membrane. In Homo sapiens (Human), this protein is Endogenous retrovirus group K member 113 Env polyprotein (HERVK_113).